Consider the following 351-residue polypeptide: sn-glycerol-3-phosphate import ATP-binding protein UgpC (351 aa).

Positions 4–234 constitute an ABC transporter domain; it reads ITLKDLVKSY…PATLFVAGFI (231 aa). An ATP-binding site is contributed by 36 to 43; it reads GPSGCGKS.

Belongs to the ABC transporter superfamily. sn-glycerol-3-phosphate importer (TC 3.A.1.1.3) family. As to quaternary structure, the complex is composed of two ATP-binding proteins (UgpC), two transmembrane proteins (UgpA and UgpE) and a solute-binding protein (UgpB).

The protein localises to the cell inner membrane. It catalyses the reaction sn-glycerol 3-phosphate(out) + ATP + H2O = sn-glycerol 3-phosphate(in) + ADP + phosphate + H(+). In terms of biological role, part of the ABC transporter complex UgpBAEC involved in sn-glycerol-3-phosphate (G3P) import. Responsible for energy coupling to the transport system. The protein is sn-glycerol-3-phosphate import ATP-binding protein UgpC of Ruegeria sp. (strain TM1040) (Silicibacter sp.).